A 307-amino-acid polypeptide reads, in one-letter code: Follistatin-related protein 1 (307 aa).

The signal sequence occupies residues 1–19 (MMWRRWLALALVAVAWVHA). The Follistatin-like domain maps to 29–52 (ICANVFCGAGRECAVTEKGEPTCL). 5 disulfide bridges follow: Cys-30/Cys-41, Cys-35/Cys-51, Cys-53/Cys-83, Cys-57/Cys-76, and Cys-65/Cys-97. One can recognise a Kazal-like domain in the interval 47-99 (GEPTCLCIEQCKPHKRPVCGSNGKTYLNHCELHRDACLTGSKIQVDYDGHCKE). Residue Asn-143 is glycosylated (N-linked (GlcNAc...) asparagine). One can recognise an EF-hand 1 domain in the interval 143 to 177 (NYSEILDKYFKNFDNGDSRLDSSEFLKFVEQNETA). Ser-164 is subject to Phosphoserine. Asn-174 and Asn-179 each carry an N-linked (GlcNAc...) asparagine glycan. The 36-residue stretch at 192-227 (LRGLCVDALIELSDENADWKLSFQEFLKCLNPSFNP) folds into the EF-hand 2 domain. The VWFC domain occupies 232-286 (CALEDETYADGAETEVDCNRCVCACGNWVCTAMTCDGKNQKGAQTQAEEEMTRYV).

As to quaternary structure, homodimer. Interacts with SCN10A. Interacts with DIP2A; DIP2A may act as a cell surface receptor for FSTL1. Interacts with BMP4. Interacts with CD14; this interaction promotes TL4-mediated signaling cascade.

The protein resides in the secreted. Functionally, secreted glycoprotein that is involved in various physiological processes, such as angiogenesis, regulation of the immune response, cell proliferation and differentiation. Plays a role in the development of the central nervous system, skeletal system, lungs, and ureter. Promotes endothelial cell survival, migration and differentiation into network structures in an AKT-dependent manner. Also promotes survival of cardiac myocytes. Initiates various signaling cascades by activating different receptors on the cell surface such as DIP2A, TLR4 or BMP receptors. In Bos taurus (Bovine), this protein is Follistatin-related protein 1 (FSTL1).